Consider the following 108-residue polypeptide: UPF0145 protein Patl_2194 (108 aa).

It belongs to the UPF0145 family.

The chain is UPF0145 protein Patl_2194 from Pseudoalteromonas atlantica (strain T6c / ATCC BAA-1087).